The sequence spans 365 residues: uncharacterized protein (365 aa).

Residues 1 to 133 (MVLAKQWVLK…RKLDKNKVGK (133 aa)) are Cytoplasmic-facing. A helical transmembrane segment spans residues 134–154 (LWWYLSVLGGTSLTAYFIFFT). Residues 155–169 (YAQLQEREEDYGKVY) are Extracellular-facing. The helical transmembrane segment at 170–190 (LISGAAGAVGTVCIQLALNVF) threads the bilayer. At 191–365 (KASKVIAIAG…KLITKVNNEE (175 aa)) the chain is on the cytoplasmic side.

The protein resides in the membrane. This is an uncharacterized protein from Saccharomyces cerevisiae (strain ATCC 204508 / S288c) (Baker's yeast).